Here is a 182-residue protein sequence, read N- to C-terminus: Shikimate kinase (182 aa).

14-19 (GAGKTT) contributes to the ATP binding site. Thr18 is a Mg(2+) binding site. 3 residues coordinate substrate: Asp36, Arg60, and Gly84. Arg122 is an ATP binding site. Arg141 contacts substrate.

It belongs to the shikimate kinase family. Monomer. Mg(2+) serves as cofactor.

It localises to the cytoplasm. It catalyses the reaction shikimate + ATP = 3-phosphoshikimate + ADP + H(+). It participates in metabolic intermediate biosynthesis; chorismate biosynthesis; chorismate from D-erythrose 4-phosphate and phosphoenolpyruvate: step 5/7. Catalyzes the specific phosphorylation of the 3-hydroxyl group of shikimic acid using ATP as a cosubstrate. The sequence is that of Shikimate kinase from Marinomonas sp. (strain MWYL1).